Reading from the N-terminus, the 247-residue chain is Triosephosphate isomerase (247 aa).

Asn-10 and Lys-12 together coordinate substrate. The active-site Electrophile is the His-94. Glu-164 acts as the Proton acceptor in catalysis.

This sequence belongs to the triosephosphate isomerase family. Homodimer.

The catalysed reaction is D-glyceraldehyde 3-phosphate = dihydroxyacetone phosphate. The protein operates within carbohydrate biosynthesis; gluconeogenesis. It participates in carbohydrate degradation; glycolysis; D-glyceraldehyde 3-phosphate from glycerone phosphate: step 1/1. The sequence is that of Triosephosphate isomerase (Tpi) from Culex tarsalis (Encephalitis mosquito).